The primary structure comprises 246 residues: Ribonuclease PH (246 aa).

Residues Arg95 and 133–135 contribute to the phosphate site; that span reads GTR.

It belongs to the RNase PH family. In terms of assembly, homohexameric ring arranged as a trimer of dimers.

It catalyses the reaction tRNA(n+1) + phosphate = tRNA(n) + a ribonucleoside 5'-diphosphate. Functionally, phosphorolytic 3'-5' exoribonuclease that plays an important role in tRNA 3'-end maturation. Removes nucleotide residues following the 3'-CCA terminus of tRNAs; can also add nucleotides to the ends of RNA molecules by using nucleoside diphosphates as substrates, but this may not be physiologically important. Probably plays a role in initiation of 16S rRNA degradation (leading to ribosome degradation) during starvation. This chain is Ribonuclease PH, found in Bordetella bronchiseptica (strain ATCC BAA-588 / NCTC 13252 / RB50) (Alcaligenes bronchisepticus).